A 186-amino-acid polypeptide reads, in one-letter code: Ribosome maturation factor RimP (186 aa).

Belongs to the RimP family.

It is found in the cytoplasm. Required for maturation of 30S ribosomal subunits. This chain is Ribosome maturation factor RimP, found in Novosphingobium aromaticivorans (strain ATCC 700278 / DSM 12444 / CCUG 56034 / CIP 105152 / NBRC 16084 / F199).